A 579-amino-acid polypeptide reads, in one-letter code: L-arabinonate dehydratase (579 aa).

Cys59 provides a ligand contact to [2Fe-2S] cluster. Residue Glu91 participates in Mg(2+) binding. Residue Cys127 coordinates [2Fe-2S] cluster. Asp128 provides a ligand contact to Mg(2+). Cys200 serves as a coordination point for [2Fe-2S] cluster. Position 453 (Glu453) interacts with Mg(2+).

Belongs to the IlvD/Edd family. As to quaternary structure, homotetramer. [2Fe-2S] cluster is required as a cofactor. It depends on Mg(2+) as a cofactor.

It catalyses the reaction L-arabinonate = 2-dehydro-3-deoxy-L-arabinonate + H2O. It carries out the reaction D-galactonate = 2-dehydro-3-deoxy-D-galactonate + H2O. The enzyme catalyses D-fuconate = 2-dehydro-3-deoxy-D-fuconate + H2O. The protein operates within carbohydrate metabolism. Its function is as follows. Catalyzes the dehydration of L-arabinonate to 2-dehydro-3-deoxy-L-arabinonate during L-arabinose degradation. Can also dehydrate D-galactonate and D-fuconate with good catalytic efficiency. Has weak activity with D-xylonate and D-gluconate. This Rhizobium leguminosarum bv. trifolii (strain WSM2304) protein is L-arabinonate dehydratase.